A 260-amino-acid polypeptide reads, in one-letter code: Methyl-coenzyme M reductase I subunit gamma (260 aa).

Coenzyme M is bound at residue arginine 123.

This sequence belongs to the methyl-coenzyme M reductase gamma subunit family. As to quaternary structure, MCR is a hexamer of two alpha, two beta, and two gamma chains, forming a dimer of heterotrimers. Coenzyme F430 serves as cofactor.

It is found in the cytoplasm. It carries out the reaction coenzyme B + methyl-coenzyme M = methane + coenzyme M-coenzyme B heterodisulfide. It participates in one-carbon metabolism; methyl-coenzyme M reduction; methane from methyl-coenzyme M: step 1/1. In terms of biological role, component of the methyl-coenzyme M reductase (MCR) I that catalyzes the reductive cleavage of methyl-coenzyme M (CoM-S-CH3 or 2-(methylthio)ethanesulfonate) using coenzyme B (CoB or 7-mercaptoheptanoylthreonine phosphate) as reductant which results in the production of methane and the mixed heterodisulfide of CoB and CoM (CoM-S-S-CoB). This is the final step in methanogenesis. The sequence is that of Methyl-coenzyme M reductase I subunit gamma (mcrG) from Methanocaldococcus jannaschii (strain ATCC 43067 / DSM 2661 / JAL-1 / JCM 10045 / NBRC 100440) (Methanococcus jannaschii).